Here is a 355-residue protein sequence, read N- to C-terminus: MQPSTLQALTKRVLATQHVSNDDYCILKRFGLWWHDAPITLYTDGEQILIKTPCYKEGIKLNTALVLAVKENNYDLIVLFTEWGANINYALLSVNKEHTRNLCRKLGAKEGLEASEVLRFFFETKRHKTSSNIILCHELFSNNPFLQNVNMVELRMIIYWELKDLTTNLIVNEDSFTEMLTKYWYGIAVKYNLKEAIQYFCQEYEHLNEWRLICALSFNNVFDLHEICNTMNIDMNINKMMRLACMRDNNFLTIYYCFALGADINRAMYGSVSNFRIENMFFCMDLGADVFEESLELAERHGYSVIVDILSLKIYKANPILLSKETDPEKINTLLKNYYPKNMLAYDICNVDNYL.

The stretch at 60 to 92 is one ANK repeat; that stretch reads KLNTALVLAVKENNYDLIVLFTEWGANINYALL.

Belongs to the asfivirus MGF 360 family.

Functionally, plays a role in virus cell tropism, and may be required for efficient virus replication in macrophages. In Ornithodoros (relapsing fever ticks), this protein is Protein MGF 360-3L.